The primary structure comprises 357 residues: Protein pelota homolog (357 aa).

This sequence belongs to the eukaryotic release factor 1 family. Pelota subfamily. In terms of assembly, monomer. It depends on a divalent metal cation as a cofactor.

The protein localises to the cytoplasm. Functionally, may function in recognizing stalled ribosomes, interact with stem-loop structures in stalled mRNA molecules, and effect endonucleolytic cleavage of the mRNA. May play a role in the release non-functional ribosomes and degradation of damaged mRNAs. Has endoribonuclease activity. This is Protein pelota homolog from Halobacterium salinarum (strain ATCC 29341 / DSM 671 / R1).